We begin with the raw amino-acid sequence, 364 residues long: Chorismate synthase (364 aa).

The interval 41 to 60 (MQHDLDRRRPGTSRYTTARR) is disordered. Positions 48 and 54 each coordinate NADP(+). Residues 125–127 (RSS), 238–239 (NA), Gly278, 293–297 (KPTSS), and Arg319 contribute to the FMN site.

Belongs to the chorismate synthase family. As to quaternary structure, homotetramer. It depends on FMNH2 as a cofactor.

It catalyses the reaction 5-O-(1-carboxyvinyl)-3-phosphoshikimate = chorismate + phosphate. The protein operates within metabolic intermediate biosynthesis; chorismate biosynthesis; chorismate from D-erythrose 4-phosphate and phosphoenolpyruvate: step 7/7. Functionally, catalyzes the anti-1,4-elimination of the C-3 phosphate and the C-6 proR hydrogen from 5-enolpyruvylshikimate-3-phosphate (EPSP) to yield chorismate, which is the branch point compound that serves as the starting substrate for the three terminal pathways of aromatic amino acid biosynthesis. This reaction introduces a second double bond into the aromatic ring system. This chain is Chorismate synthase, found in Shewanella baltica (strain OS223).